A 448-amino-acid polypeptide reads, in one-letter code: Trigger factor (448 aa).

In terms of domain architecture, PPIase FKBP-type spans 167–253 (GSIVRVDFVE…IKDIKKRDIP (87 aa)).

It belongs to the FKBP-type PPIase family. Tig subfamily.

It localises to the cytoplasm. The catalysed reaction is [protein]-peptidylproline (omega=180) = [protein]-peptidylproline (omega=0). In terms of biological role, involved in protein export. Acts as a chaperone by maintaining the newly synthesized protein in an open conformation. Functions as a peptidyl-prolyl cis-trans isomerase. In Borrelia hermsii (strain HS1 / DAH), this protein is Trigger factor.